The primary structure comprises 326 residues: Cell surface glycoprotein CD200 receptor 1 (326 aa).

Residues 1 to 25 (MFCFWRTSALAVLLIWGVFVAGSSC) form the signal peptide. Over 26 to 238 (TDKNQTTQNN…SRGGNQSLRP (213 aa)) the chain is Extracellular. 11 N-linked (GlcNAc...) asparagine glycosylation sites follow: N29, N34, N35, N44, N93, N101, N159, N192, N207, N221, and N233. The Ig-like V-type domain maps to 51–136 (IGTKALLCCF…YTCETVTPEG (86 aa)). Intrachain disulfides connect C58/C129 and C82/C97. In terms of domain architecture, Ig-like C2-type spans 138–229 (FEKNYDLQVL…GNQSLSIELS (92 aa)). 2 disulfide bridges follow: C164–C213 and C183–C201. A helical membrane pass occupies residues 239–259 (YIPYIIPSIIILIIIGCICLL). Over 260-326 (KISGFRKCKL…DCLTLSAIGI (67 aa)) the chain is Cytoplasmic.

This sequence belongs to the CD200R family. CD200 and CD200R1 interact via their respective N-terminal Ig-like domains. Expressed in granulocytes, monocytes, most T-cells and a subset of NK, NKT and B-cells (at protein level). Expressed in the spleen, lung, liver, testis, bone marrow, lymph nodes, spinal cord, kidney, uterus and small intestine. Expressed in mast and dendritic cells. Expressed in the lung of N.brasiliensis-infected mice.

It is found in the cell membrane. Functionally, inhibitory receptor for the CD200/OX2 cell surface glycoprotein. Limits inflammation by inhibiting the expression of pro-inflammatory molecules including TNF-alpha, interferons, and inducible nitric oxide synthase (iNOS) in response to selected stimuli. The protein is Cell surface glycoprotein CD200 receptor 1 (Cd200r1) of Mus musculus (Mouse).